Consider the following 374-residue polypeptide: Deoxyguanosinetriphosphate triphosphohydrolase-like protein (374 aa).

The region spanning 65-196 (RLTHSLEVAQ…ANLADEIAYN (132 aa)) is the HD domain.

It belongs to the dGTPase family. Type 2 subfamily.

The polypeptide is Deoxyguanosinetriphosphate triphosphohydrolase-like protein (dgt) (Nitrosomonas europaea (strain ATCC 19718 / CIP 103999 / KCTC 2705 / NBRC 14298)).